The chain runs to 1582 residues: Sca1 complex scaffold protein scaA (1582 aa).

Composition is skewed to low complexity over residues 1–14 (MSSLDPSLSTTPST) and 109–131 (LSPSLSSSSSSSSSPSPPTTTST). Disordered regions lie at residues 1 to 22 (MSSLDPSLSTTPSTNRRGTFSK) and 108 to 147 (GLSPSLSSSSSSSSSPSPPTTTSTTPPPPNNNNNSKQIKK). The TPR 1 repeat unit spans residues 4 to 37 (LDPSLSTTPSTNRRGTFSKAKSFRRAALNLEPQG). The stretch at 166-199 (IYTSFPESMAFDDYMDYEESLVEWKRQVEQNLGI) is one TPR 2 repeat. Positions 246–349 (IKETNSSVND…PSTGSLAGFV (104 aa)) are disordered. Composition is skewed to polar residues over residues 249-267 (TNSSVNDDGESFSHSPTLR), 288-310 (NKDNASSQGTNHGVTLNHPNSGI), and 318-332 (SDTSTGSFEGTQLDG). Serine 359 carries the phosphoserine; by PKB modification. Residues 400–600 (RSGSGFGMDH…QRQTSTWFRG (201 aa)) form a gefA and gefH binding region. Disordered regions lie at residues 468–493 (PKNSELSTDDGSGGGSGGSGVDGVGG) and 686–734 (SLSS…DKDK). Composition is skewed to gly residues over residues 478–493 (GSGGGSGGSGVDGVGG) and 694–714 (QQQGGSGGGSGGSGSGSGSGS). Residues 715–726 (GLNMSGTSGSSG) are compositionally biased toward low complexity. The stretch at 742-777 (MHSINNTTNVGTKEDRRQYTKILQTYEQRLQFSFRL) is one TPR 3 repeat. Positions 864–875 (GGGSGGASGGGI) are enriched in gly residues. The tract at residues 864–978 (GGGSGGASGG…GSISTHPNTP (115 aa)) is disordered. Over residues 903 to 928 (HIPSGSSLLSSPPNRQGSTGSFSFIG) the composition is skewed to low complexity. A compositionally biased stretch (polar residues) spans 940-953 (NSSSLESPRTQSQL). Residues 960 to 972 (GSSPRSHSGGSIS) show a composition bias toward low complexity. The interval 1000 to 1400 (FLDLTNEKLA…SIKKEGNLYN (401 aa)) is pppA and pho2B binding. Residues 1080 to 1113 (TQEVVRLVFVYYYLGIIQERLNFFSNNVGILGFV) form a TPR 4 repeat.

Component of the Sca1 complex composed of at least gefA, gefH, scaA, phr, and the protein phosphatase 2A subunits pppA and pho2B. Phosphorylated at Ser-359 by PKB and PKBR1 is induced by chemoattractant.

The protein resides in the cell membrane. Its function is as follows. Component of the Sca1 complex, a regulator of cell motility, chemotaxis and signal relay. The Sca1 complex is recruited to the plasma membrane in a chemoattractant- and F-actin-dependent manner and is enriched at the leading edge of chemotaxing cells where it regulates F-actin dynamics and signal relay by controlling the activation of rasC and the downstream target of rapamycin complex 2 (TORC2)-Akt/protein kinase B (PKB) pathway. ScaA acts as a molecular scaffold, bringing together gefA, gefH and phr with PP2A. The polypeptide is Sca1 complex scaffold protein scaA (Dictyostelium discoideum (Social amoeba)).